The chain runs to 451 residues: MDRFIRMLEDRVMPVAGKIAEQRHLQAIRDGIILSMPLLIIGSLFLIVGFLPIPGYNEWMAKWFGEHWLDKLLYPVGATFDIMALVVSFGVAYRLAEKYKVDALSAGAISLAAFLLATPYQVPFTPEGAKETIMVSGGIPVQWVGSKGLFVAMILAIVSTEIYRKIIQKNIVIKLPDGVPPAVARSFVALIPGAAVLVVVWVARLILEMTPFESFHNIVSVLLNKPLSVLGGSVFGAIVAVLLVQLLWSTGLHGAAIVGGVMGPIWLSLMDENRMVFQQNPNAELPNVITQQFFDLWIYIGGSGATLALALTMMFRARSRQLKSLGRLAIAPGIFNINEPITFGMPIVMNPLLIIPFILVPVVLVVVSYAAMATGLVAKPSGVAVPWTTPIVISGYLATGGKISGSILQIVNFFIAFAIYYPFFSIWDKQKAAEEQADPTISSGAGATHSL.

A PTS EIIC type-3 domain is found at 8-423; it reads LEDRVMPVAG…FIAFAIYYPF (416 aa). Transmembrane regions (helical) follow at residues 31 to 51, 72 to 92, 104 to 124, 138 to 158, 187 to 207, 227 to 247, 250 to 270, 293 to 313, 347 to 367, and 407 to 427; these read GIIL…VGFL, LLYP…FGVA, LSAG…QVPF, GIPV…LAIV, FVAL…RLIL, LSVL…VQLL, TGLH…LSLM, FFDL…ALTM, IVMN…LVVV, and ILQI…FSIW.

The protein resides in the cell membrane. In terms of biological role, the phosphoenolpyruvate-dependent sugar phosphotransferase system (sugar PTS), a major carbohydrate active transport system, catalyzes the phosphorylation of incoming sugar substrates concomitantly with their translocation across the cell membrane. The enzyme II CelABD PTS system is involved in cellobiose transport. The chain is PTS system cellobiose-specific EIIC component from Geobacillus stearothermophilus (Bacillus stearothermophilus).